We begin with the raw amino-acid sequence, 2291 residues long: Protein Ycf2 B (2291 aa).

Gly1642 to Ser1649 contacts ATP.

It belongs to the Ycf2 family.

It is found in the plastid. It localises to the chloroplast stroma. In terms of biological role, probable ATPase of unknown function. Its presence in a non-photosynthetic plant (Epifagus virginiana) and experiments in tobacco indicate that it has an essential function which is probably not related to photosynthesis. The protein is Protein Ycf2 B (ycf2-B) of Atropa belladonna (Belladonna).